Reading from the N-terminus, the 251-residue chain is Aspartate/glutamate leucyltransferase (251 aa).

Belongs to the R-transferase family. Bpt subfamily.

It localises to the cytoplasm. The enzyme catalyses N-terminal L-glutamyl-[protein] + L-leucyl-tRNA(Leu) = N-terminal L-leucyl-L-glutamyl-[protein] + tRNA(Leu) + H(+). It catalyses the reaction N-terminal L-aspartyl-[protein] + L-leucyl-tRNA(Leu) = N-terminal L-leucyl-L-aspartyl-[protein] + tRNA(Leu) + H(+). Functions in the N-end rule pathway of protein degradation where it conjugates Leu from its aminoacyl-tRNA to the N-termini of proteins containing an N-terminal aspartate or glutamate. This chain is Aspartate/glutamate leucyltransferase, found in Stenotrophomonas maltophilia (strain R551-3).